The primary structure comprises 1148 residues: Pyruvate carboxylase (1148 aa).

The 457-residue stretch at 1–457 (MSQQSIQKVL…DTSFIDTTPE (457 aa)) folds into the Biotin carboxylation domain. ATP-binding residues include K121, E205, and H240. An ATP-grasp domain is found at 125–321 (REQAEKAGIP…IVQTQILVAQ (197 aa)). K242 is an active-site residue. Positions 534–802 (VLLTDTTFRD…RPEMNVQGVE (269 aa)) constitute a Pyruvate carboxyltransferase domain. Substrate contacts are provided by residues 542–546 (RDAHQ) and R615. Residue D543 participates in a divalent metal cation binding. A divalent metal cation contacts are provided by K712, H741, and H743. K712 is modified (N6-carboxylysine). T876 contacts substrate. Residues 1071-1146 (KADRTNPSHI…QTGDLLLEIE (76 aa)) form the Biotinyl-binding domain. N6-biotinyllysine is present on K1112.

Homotetramer. At very low potassium concentrations, when intracellular levels of c-di-AMP are low, interacts with apo-DarB. c-di-AMP inhibits the binding of DarB to PYC. Does not bind directly c-di-AMP. Biotin is required as a cofactor.

The enzyme catalyses hydrogencarbonate + pyruvate + ATP = oxaloacetate + ADP + phosphate + H(+). Its activity is regulated as follows. Activated by the cyclic di-AMP (c-di-AMP) receptor DarB in the absence of c-di-AMP. Allosterically activated by acetyl-CoA. Inhibited by the biotin-complexing protein avidin. Catalyzes a 2-step reaction, involving the ATP-dependent carboxylation of the covalently attached biotin in the first step and the transfer of the carboxyl group to pyruvate in the second, leading to oxaloacetate production. Fulfills an anaplerotic function in B.subtilis as it is necessary for growth on glucose, but is not required for sporulation. In Bacillus subtilis (strain 168), this protein is Pyruvate carboxylase (pyc).